The chain runs to 175 residues: Ribosome maturation factor RimM (175 aa).

A PRC barrel domain is found at 95–175; sequence SEDEFYWREL…RIEVDWDPGF (81 aa).

Belongs to the RimM family. In terms of assembly, binds ribosomal protein uS19.

It is found in the cytoplasm. An accessory protein needed during the final step in the assembly of 30S ribosomal subunit, possibly for assembly of the head region. Essential for efficient processing of 16S rRNA. May be needed both before and after RbfA during the maturation of 16S rRNA. It has affinity for free ribosomal 30S subunits but not for 70S ribosomes. This chain is Ribosome maturation factor RimM, found in Aliivibrio salmonicida (strain LFI1238) (Vibrio salmonicida (strain LFI1238)).